We begin with the raw amino-acid sequence, 535 residues long: Ribonuclease Y (535 aa).

Residues 4–24 (IILAMVCALIGLIIGYVAISM) form a helical membrane-spanning segment. A disordered region spans residues 107 to 145 (TDRASSLDRKDENLSNKEKMLDSKEQSLTDKSRHINERE). Residues 225 to 285 (TITTVHLPDD…IRREIARMTL (61 aa)) form the KH domain. In terms of domain architecture, HD spans 351 to 444 (VLRHSVEVGK…VAAADALSSA (94 aa)).

Belongs to the RNase Y family.

It localises to the cell membrane. Functionally, endoribonuclease that initiates mRNA decay. The sequence is that of Ribonuclease Y from Streptococcus agalactiae serotype Ia (strain ATCC 27591 / A909 / CDC SS700).